We begin with the raw amino-acid sequence, 653 residues long: E3 ubiquitin-protein ligase TRIM32 (653 aa).

N-acetylalanine is present on alanine 2. An RING-type zinc finger spans residues 20–65; that stretch reads CPICMESFTEEQLRPKLLHCGHTICRQCLEKLLASSINGVRCPFCS. Serine 55 bears the Phosphoserine; by CHEK2 mark. Zn(2+) contacts are provided by cysteine 100, cysteine 103, cysteine 123, and histidine 128. The B box-type zinc finger occupies 103 to 133; that stretch reads CGRRLPRQFCRSCGLVLCEPCREADHQPPGH. A coiled-coil region spans residues 138 to 197; sequence VKEAAEERRRDFGEKLTRLRELMGELQRRKAALEGVSKDLQARYKAVLQEYGHEERRVQD. Serine 328, serine 335, and serine 339 each carry phosphoserine. NHL repeat units follow at residues 358-401, 415-458, 459-499, 562-605, and 606-646; these read LKKM…FTRK, DSFV…YTLD, GHCV…FTVD, GRQI…FPKG, and GGYS…YSYH.

Belongs to the TRIM/RBCC family. It self-associates. Interacts with DTNBP1. Interacts with PIAS4/PIASY upon treatment with UVB and TNF-alpha. Interacts with AMBRA1; promoting activation of ULK1 through unanchored 'Lys-63'-linked polyubiquitin chains. Interacts with TICAM1 and TAX1BP1; these interactions target TICAM1 to TAX1BP1-mediated selective autophagic degradation. In terms of assembly, (Microbial infection) Interacts with S.typhimurium protein SseK3; SseK3 does not glycosylate TRIM32. Post-translationally, ubiquitinated. Phosphorylation at Ser-55 by CHEK2 under oxidative stress, activates the E3 ligase activity and promotes ATG7 ubiquitination leading to positive regulation of the autophagosme assembly. Spleen, thymus, prostate, testis, ovary, intestine, colon and skeletal muscle.

It localises to the cytoplasm. The protein resides in the mitochondrion. It is found in the endoplasmic reticulum. The catalysed reaction is S-ubiquitinyl-[E2 ubiquitin-conjugating enzyme]-L-cysteine + [acceptor protein]-L-lysine = [E2 ubiquitin-conjugating enzyme]-L-cysteine + N(6)-ubiquitinyl-[acceptor protein]-L-lysine.. It participates in protein modification; protein ubiquitination. Its function is as follows. E3 ubiquitin ligase that plays a role in various biological processes including neural stem cell differentiation, innate immunity, inflammatory resonse and autophagy. Plays a role in virus-triggered induction of IFN-beta and TNF-alpha by mediating the ubiquitination of STING1. Mechanistically, targets STING1 for 'Lys-63'-linked ubiquitination which promotes the interaction of STING1 with TBK1. Regulates bacterial clearance and promotes autophagy in Mycobacterium tuberculosis-infected macrophages. Negatively regulates TLR3/4-mediated innate immune and inflammatory response by triggering the autophagic degradation of TICAM1 in an E3 activity-independent manner. Plays an essential role in oxidative stress induced cell death by inducing loss of transmembrane potential and enhancing mitochondrial reactive oxygen species (ROS) production during oxidative stress conditions. Ubiquitinates XIAP and targets it for proteasomal degradation. Ubiquitinates DTNBP1 (dysbindin) and promotes its degradation. May ubiquitinate BBS2. Ubiquitinates PIAS4/PIASY and promotes its degradation in keratinocytes treated with UVB and TNF-alpha. Also acts as a regulator of autophagy by mediating formation of unanchored 'Lys-63'-linked polyubiquitin chains that activate ULK1: interaction with AMBRA1 is required for ULK1 activation. Positively regulates dendritic branching by promoting ubiquitination and subsequent degradation of the epigenetic factor CDYL. Under metabolic stress and phosphorylation by CHK2, mediates 'Lys-63'-linked ubiquitination of ATG7 at 'Lys-45' to initiate autophagy. (Microbial infection) May play a significant role in mediating the biological activity of the HIV-1 Tat protein in vivo. Binds specifically to the activation domain of HIV-1 Tat and can also interact with the HIV-2 and EIAV Tat proteins in vivo. This Homo sapiens (Human) protein is E3 ubiquitin-protein ligase TRIM32.